Reading from the N-terminus, the 598-residue chain is MVNEVPTLKKKIIFKYFKPLLTFTKKEDPYELRVKSAPPLNIIEERKEPKKFVLCKPDGTPITLDDLSDISDSEEEEDTKLDMKDSIKEDVKDSIKEDVKDSSKEDVKDDVIEDVKGSINEEINSTCGTCSFINLKREKILNELLEMYRVEESVPYSFVPTNVPQIMYSVGEILNCINKIPFTLKLLKKDVNKIPVNYKEFKINKETIIEKATFELNKLTNTNIKRIITNLKNLNIETIQQAKYLGNLIVFKAINEPQYCNLYAMVVGALKKDFKSKEELGLHKKQTAFFGTVLTSAMKVLEEKVEWADTKVLDKNLYKNAFEYERAFEEQETERYLRKKKTLGAVNLLCDLYNLDVITLKHIQSRLNEFLNIENEEVVEVLGKFIEKIGEKMYLNDKSDYANMICSYLDACKNKYSNRVKFYIMDVLDKKKNWKKPVSKTENLFSSLIMEDEPALDTPYQYQEQVIANEEEEDSLELLKTIDNIYQDLKDAYDEEDEIMIADNFKIASNTFGKISFFSTYFSECITNSRKSKLLVPFVINFFNETNLNESELFDIINKHKEKLNELKIDFPLSQKIMSLYVINFVVDRLSKKIHMIN.

Residues 65-86 are disordered; it reads DDLSDISDSEEEEDTKLDMKDS. Residues 66 to 79 show a composition bias toward acidic residues; the sequence is DLSDISDSEEEEDT. Positions 209–434 constitute an MIF4G domain; sequence IEKATFELNK…MDVLDKKKNW (226 aa).

Belongs to the eukaryotic initiation factor 4G family. As to quaternary structure, component of the eIF4F complex, which composition varies with external and internal environmental conditions.

The protein resides in the cytoplasm. Component of the protein complex eIF4F, which is involved in the recognition of the mRNA cap, ATP-dependent unwinding of 5'-terminal secondary structure and recruitment of mRNA to the ribosome. The polypeptide is Probable eukaryotic translation initiation factor 4 gamma homolog (EIF4G) (Vairimorpha ceranae (strain BRL01) (Microsporidian parasite)).